The chain runs to 79 residues: Morintide mO1 (79 aa).

Positions 1 to 20 (MAKLSFLSLFLLCLVATATA) are cleaved as a signal peptide. One can recognise a Chitin-binding type-1 domain in the interval 21 to 63 (QNCGRQAGNRACANQLCCSQYGFCGSTSEYCSRANGCQSNCRG). Disulfide bonds link cysteine 23/cysteine 38, cysteine 32/cysteine 44, cysteine 37/cysteine 51, and cysteine 57/cysteine 61. Positions 64–79 (GGGADGAGGEAGGGGP) are excised as a propeptide.

As to expression, leaves (at protein level).

Functionally, chitin-binding protein which functions in defense against chitin-containing fungal pathogens. Inhibits the growth of budding hyphae in A.alternata and A.brassiciola. This Moringa oleifera (Horseradish tree) protein is Morintide mO1.